The primary structure comprises 789 residues: Disintegrin and metalloproteinase domain-containing protein 7 (789 aa).

Positions 1-25 (MFPTGIFLMSVLISQMQGRGIVGVE) are cleaved as a signal peptide. The propeptide occupies 26–176 (GQELVHPKKL…NYSCEGLNFT (151 aa)). Asparagine 84, asparagine 167, and asparagine 174 each carry an N-linked (GlcNAc...) asparagine glycan. Topologically, residues 177 to 668 (KKSTLIDAKI…WGEALNLTSV (492 aa)) are extracellular. Residues 199-393 (KFIELFVVAD…QKPACILNNP (195 aa)) form the Peptidase M12B domain. 4 disulfides stabilise this stretch: cysteine 310–cysteine 388, cysteine 350–cysteine 372, cysteine 352–cysteine 357, and cysteine 459–cysteine 479. In terms of domain architecture, Disintegrin spans 401–487 (YPFCGNKKVD…ECPKDESQAN (87 aa)). Residues asparagine 583, asparagine 628, and asparagine 664 are each glycosylated (N-linked (GlcNAc...) asparagine). Residues 669 to 689 (SIMVVVLVMVIIGVGLVILLI) traverse the membrane as a helical segment. Over 690–789 (RYQKCIKMKQ…DSQSDCTRLG (100 aa)) the chain is Cytoplasmic. Positions 762–771 (DPRGIADPKQ) are enriched in basic and acidic residues. The interval 762–789 (DPRGIADPKQNDNMNLNLDSQSDCTRLG) is disordered. Polar residues predominate over residues 772 to 789 (NDNMNLNLDSQSDCTRLG).

Interacts with ITM2B in sperm; the interaction increases following capacitation. Interacts with HSPA5 and CANX. In terms of tissue distribution, expressed specifically in the caput region of the epididymis (at protein level).

Its subcellular location is the membrane. Its function is as follows. Required for normal male fertility via maintenance of epithelial cell morphology in the caput epididymis and subsequently correct epididymis lumen structure required for sperm development. Plays a role in sperm motility, flagella morphology and tyrosine phosphorylation during sperm capacitance. Plays a role in normal expression levels of HSPA5, ITM2B and ADAM2 in sperm both prior to and post-capacitation. This is a non catalytic metalloprotease-like protein. The sequence is that of Disintegrin and metalloproteinase domain-containing protein 7 from Rattus norvegicus (Rat).